Reading from the N-terminus, the 229-residue chain is 2,3-bisphosphoglycerate-dependent phosphoglycerate mutase (229 aa).

Substrate contacts are provided by residues 8–15 (RHGESAWN), 21–22 (TG), arginine 60, 87–90 (ERHY), lysine 98, 114–115 (RR), and 183–184 (GN). Histidine 9 functions as the Tele-phosphohistidine intermediate in the catalytic mechanism. Glutamate 87 serves as the catalytic Proton donor/acceptor.

Belongs to the phosphoglycerate mutase family. BPG-dependent PGAM subfamily. Homodimer.

The catalysed reaction is (2R)-2-phosphoglycerate = (2R)-3-phosphoglycerate. Its pathway is carbohydrate degradation; glycolysis; pyruvate from D-glyceraldehyde 3-phosphate: step 3/5. Its function is as follows. Catalyzes the interconversion of 2-phosphoglycerate and 3-phosphoglycerate. The polypeptide is 2,3-bisphosphoglycerate-dependent phosphoglycerate mutase (Polynucleobacter necessarius subsp. necessarius (strain STIR1)).